Reading from the N-terminus, the 617-residue chain is DNA mismatch repair protein MutL (617 aa).

The disordered stretch occupies residues 363–394; the sequence is YAPAYGARPPQPSAWSVDTSPHRPLDDGQNRF. Basic and acidic residues predominate over residues 382–392; sequence SPHRPLDDGQN.

It belongs to the DNA mismatch repair MutL/HexB family.

Its function is as follows. This protein is involved in the repair of mismatches in DNA. It is required for dam-dependent methyl-directed DNA mismatch repair. May act as a 'molecular matchmaker', a protein that promotes the formation of a stable complex between two or more DNA-binding proteins in an ATP-dependent manner without itself being part of a final effector complex. The protein is DNA mismatch repair protein MutL of Allorhizobium ampelinum (strain ATCC BAA-846 / DSM 112012 / S4) (Agrobacterium vitis (strain S4)).